The following is a 181-amino-acid chain: GTP cyclohydrolase 1 2 (181 aa).

The protein belongs to the GTP cyclohydrolase I family. As to quaternary structure, homomer.

The catalysed reaction is GTP + H2O = 7,8-dihydroneopterin 3'-triphosphate + formate + H(+). It functions in the pathway cofactor biosynthesis; 7,8-dihydroneopterin triphosphate biosynthesis; 7,8-dihydroneopterin triphosphate from GTP: step 1/1. The chain is GTP cyclohydrolase 1 2 from Pseudomonas syringae pv. tomato (strain ATCC BAA-871 / DC3000).